The chain runs to 122 residues: MSTQPLLQTTPGKRIALPVRVEPKVFFANERTFLSWLSFAVVLGGLSVGLLNFGDRIGKISAGLFTIVAIGTMGYALGIYHWRASAIRRRGSGPYDDRLGPTILCFVLLAAIITNFVLRMLF.

Residues 1 to 32 (MSTQPLLQTTPGKRIALPVRVEPKVFFANERT) are Cytoplasmic-facing. A helical transmembrane segment spans residues 33–53 (FLSWLSFAVVLGGLSVGLLNF). The Vacuolar portion of the chain corresponds to 54 to 59 (GDRIGK). Residues 60–80 (ISAGLFTIVAIGTMGYALGIY) traverse the membrane as a helical segment. The Cytoplasmic portion of the chain corresponds to 81-101 (HWRASAIRRRGSGPYDDRLGP). Residues 102 to 122 (TILCFVLLAAIITNFVLRMLF) form a helical membrane-spanning segment.

The protein belongs to the VTC1 family. In terms of assembly, the VTC core complex is an integral membrane heterooligomer composed of at least the catalytic subunit vtc4 and the accessory subunits vtc1 and vtc2. vtc1 is a small membrane protein without hydrophilic domain. Vtc2 and vtc4 are related and have 2 hydrophilic domains that face the cytosol, an N-terminal SPX domain and the central core domain. The central core in vtc4 is the catalytic domain. Vtc1 interacts with GTP-bound Ras-like cdc42, which is subsequently inactivated.

It localises to the vacuole membrane. Functionally, accessory subunit of the vacuolar transporter chaperone (VTC) complex. The VTC complex acts as a vacuolar polyphosphate polymerase that catalyzes the synthesis of inorganic polyphosphate (polyP) via transfer of phosphate from ATP to a growing polyP chain, releasing ADP. VTC exposes its catalytic domain vtc4 to the cytosol, where the growing polyP chain winds through a tunnel-shaped pocket, integrating cytoplasmic polymer synthesis with polyP membrane translocation. The VTC complex carries 9 vacuolar transmembrane domains, which are likely to constitute the translocation channel into the organelle lumen. PolyP synthesis is tightly coupled to its transport into the vacuole lumen, in order to avoid otherwise toxic intermediates in the cytosol, and it depends on the proton gradient across the membrane, formed by V-ATPase. Vtc1 contributes only 3 transmembrane domains to the complex. The VTC complex also plays a role in vacuolar membrane fusion. Involved in the control of cell polarity. The protein is Vacuolar transporter chaperone complex subunit 1 of Schizosaccharomyces pombe (strain 972 / ATCC 24843) (Fission yeast).